Here is an 82-residue protein sequence, read N- to C-terminus: DNA-directed RNA polymerase subunit Rpo5 (82 aa).

The protein belongs to the archaeal Rpo5/eukaryotic RPB5 RNA polymerase subunit family. In terms of assembly, part of the RNA polymerase complex.

The protein localises to the cytoplasm. The enzyme catalyses RNA(n) + a ribonucleoside 5'-triphosphate = RNA(n+1) + diphosphate. DNA-dependent RNA polymerase (RNAP) catalyzes the transcription of DNA into RNA using the four ribonucleoside triphosphates as substrates. This Thermococcus celer protein is DNA-directed RNA polymerase subunit Rpo5.